Here is a 315-residue protein sequence, read N- to C-terminus: Epithelial cell adhesion molecule (315 aa).

The first 23 residues, 1–23 (MAGPQALAFGLLLAVVTATLAAA), serve as a signal peptide directing secretion. Over 24 to 266 (QRDCVCDNYK…APEFSMQGLT (243 aa)) the chain is Extracellular. Disulfide bonds link Cys27–Cys46, Cys29–Cys59, Cys38–Cys48, Cys66–Cys99, Cys110–Cys116, and Cys118–Cys135. A Thyroglobulin type-1 domain is found at 63 to 135 (ASKCLAMKAE…RTDKDTEITC (73 aa)). N-linked (GlcNAc...) asparagine glycosylation is present at Asn111. Asn198 carries an N-linked (GlcNAc...) asparagine glycan. A helical membrane pass occupies residues 267-289 (AGIIAVIVVVSLAVIAGIVVLVI). At 290–315 (STRKKSAKYEKAEIKEMGEIHRELNA) the chain is on the cytoplasmic side.

It belongs to the EPCAM family. Monomer. Interacts with phosphorylated CLDN7. In terms of processing, glycosylation at Asn-198 is crucial for protein stability.

It is found in the lateral cell membrane. The protein localises to the cell junction. It localises to the tight junction. Its function is as follows. May act as a physical homophilic interaction molecule between intestinal epithelial cells (IECs) and intraepithelial lymphocytes (IELs) at the mucosal epithelium for providing immunological barrier as a first line of defense against mucosal infection. Plays a role in embryonic stem cells proliferation and differentiation. Up-regulates the expression of FABP5, MYC and cyclins A and E. In Mus musculus (Mouse), this protein is Epithelial cell adhesion molecule (Epcam).